The primary structure comprises 97 residues: Spermatogenesis-associated protein 45 (97 aa).

This sequence belongs to the SPATA45 family.

In Mus musculus (Mouse), this protein is Spermatogenesis-associated protein 45 (Spata45).